We begin with the raw amino-acid sequence, 96 residues long: UPF0729 protein AGAP000931 (96 aa).

The tract at residues 65–96 (VPPGHDPVGPTVAADTATSDAVDDAASSKKTL) is disordered. Residues 75–96 (TVAADTATSDAVDDAASSKKTL) show a composition bias toward low complexity.

This sequence belongs to the UPF0729 family.

This is UPF0729 protein AGAP000931 from Anopheles gambiae (African malaria mosquito).